Consider the following 397-residue polypeptide: Mannonate dehydratase (397 aa).

The protein belongs to the mannonate dehydratase family. Requires Fe(2+) as cofactor. Mn(2+) serves as cofactor.

The enzyme catalyses D-mannonate = 2-dehydro-3-deoxy-D-gluconate + H2O. It functions in the pathway carbohydrate metabolism; pentose and glucuronate interconversion. Its function is as follows. Catalyzes the dehydration of D-mannonate. The protein is Mannonate dehydratase of Yersinia pseudotuberculosis serotype O:1b (strain IP 31758).